The sequence spans 20 residues: Toxin b subunit beta (20 aa).

As to quaternary structure, toxin b is a heterodimer composed of toxin alpha and toxin beta. Expressed by the venom gland.

Its subcellular location is the secreted. Binds to sodium channels (Nav) and affects the channel activation process. In Androctonus crassicauda (Arabian fat-tailed scorpion), this protein is Toxin b subunit beta.